A 968-amino-acid polypeptide reads, in one-letter code: RNA polymerase-associated protein RapA (968 aa).

The Helicase ATP-binding domain occupies 164–334; the sequence is DVGRRHAPRV…FARLRLLDPN (171 aa). 177–184 lines the ATP pocket; that stretch reads DEVGLGKT. A DEAH box motif is present at residues 280-283; it reads DEAH. The Helicase C-terminal domain occupies 490–662; sequence RVEWLMGYLT…YLASPDQTEG (173 aa).

This sequence belongs to the SNF2/RAD54 helicase family. RapA subfamily. Interacts with the RNAP. Has a higher affinity for the core RNAP than for the holoenzyme. Its ATPase activity is stimulated by binding to RNAP.

In terms of biological role, transcription regulator that activates transcription by stimulating RNA polymerase (RNAP) recycling in case of stress conditions such as supercoiled DNA or high salt concentrations. Probably acts by releasing the RNAP, when it is trapped or immobilized on tightly supercoiled DNA. Does not activate transcription on linear DNA. Probably not involved in DNA repair. This chain is RNA polymerase-associated protein RapA, found in Escherichia coli O1:K1 / APEC.